A 589-amino-acid polypeptide reads, in one-letter code: Vomeromodulin (589 aa).

The N-terminal stretch at 1–29 (MWVLQALAIMLSIQAGVLDLVEVPPVVRS) is a signal peptide. Disordered stretches follow at residues 49–71 (GLNDPAKNRMLPPKRPGAPSRGG) and 146–170 (LLGKEGNEDPSKPSSGSKATGGLGQ). 2 N-linked (GlcNAc...) asparagine glycosylation sites follow: Asn-419 and Asn-437.

Post-translationally, N-glycosylated. The N-glycans consist mainly of complex sialylated and fucosylated biantennary structures. As to expression, abundant in the lateral nasal glands. Also present in the posterior septal and vomeronasal glands.

Its subcellular location is the secreted. In Rattus norvegicus (Rat), this protein is Vomeromodulin.